A 797-amino-acid polypeptide reads, in one-letter code: Kinesin-like protein Klp68D (797 aa).

The region spanning 19–344 (CVQVVVRCRP…LRYASRAKSI (326 aa)) is the Kinesin motor domain. An ATP-binding site is contributed by 106–113 (GQTGTGKT). A coiled-coil region spans residues 350-384 (KNEDPQDAKLKEYQEEIERLKRLIAPQQQQRSEKQ). Disordered regions lie at residues 371-450 (RLIA…ELER), 610-656 (SSFP…PSSL), and 722-797 (ANSS…LVNK). Residues 386–396 (TIKKQRVKKPK) are compositionally biased toward basic residues. Over residues 417–431 (QVDEDRDSDGDGAES) the composition is skewed to acidic residues. A compositionally biased stretch (basic and acidic residues) spans 432-450 (ESDKENEAEVAKSNEELER). The stretch at 432–580 (ESDKENEAEV…LVKELKRQLL (149 aa)) forms a coiled coil. Residues 626-638 (GYRRPVSHPQRRR) are compositionally biased toward basic residues. A compositionally biased stretch (low complexity) spans 782–791 (KKPASAYPKA).

Belongs to the TRAFAC class myosin-kinesin ATPase superfamily. Kinesin family. Kinesin II subfamily.

The protein localises to the cytoplasm. It is found in the cytoskeleton. Functionally, plus-end directed microtubule motor that may be used for anterograde axonal transport and could conceivably move cargos in fly neurons different than those moved by kinesin heavy chain or other plus-end directed motors. The sequence is that of Kinesin-like protein Klp68D from Drosophila pseudoobscura pseudoobscura (Fruit fly).